The sequence spans 105 residues: Met repressor (105 aa).

Belongs to the MetJ family. Homodimer.

The protein localises to the cytoplasm. Its function is as follows. This regulatory protein, when combined with SAM (S-adenosylmethionine) represses the expression of the methionine regulon and of enzymes involved in SAM synthesis. The chain is Met repressor from Glaesserella parasuis serovar 5 (strain SH0165) (Haemophilus parasuis).